Consider the following 243-residue polypeptide: 7-carboxy-7-deazaguanine synthase (243 aa).

Substrate contacts are provided by residues 9–11 and R24; that span reads IMG. Residues 15–243 form the Radical SAM core domain; the sequence is YIGRRFIFVR…IQMHKYLGML (229 aa). [4Fe-4S] cluster contacts are provided by C28, C32, and C35. T84 provides a ligand contact to substrate. An S-adenosyl-L-methionine-binding site is contributed by G86.

It belongs to the radical SAM superfamily. 7-carboxy-7-deazaguanine synthase family. Homodimer. The cofactor is [4Fe-4S] cluster. S-adenosyl-L-methionine is required as a cofactor. Requires Mg(2+) as cofactor.

It carries out the reaction 6-carboxy-5,6,7,8-tetrahydropterin + H(+) = 7-carboxy-7-deazaguanine + NH4(+). It functions in the pathway purine metabolism; 7-cyano-7-deazaguanine biosynthesis. Catalyzes the complex heterocyclic radical-mediated conversion of 6-carboxy-5,6,7,8-tetrahydropterin (CPH4) to 7-carboxy-7-deazaguanine (CDG), a step common to the biosynthetic pathways of all 7-deazapurine-containing compounds. This chain is 7-carboxy-7-deazaguanine synthase, found in Methanocaldococcus jannaschii (strain ATCC 43067 / DSM 2661 / JAL-1 / JCM 10045 / NBRC 100440) (Methanococcus jannaschii).